Consider the following 187-residue polypeptide: Adenine phosphoribosyltransferase (187 aa).

Belongs to the purine/pyrimidine phosphoribosyltransferase family. Homodimer.

It localises to the cytoplasm. The enzyme catalyses AMP + diphosphate = 5-phospho-alpha-D-ribose 1-diphosphate + adenine. Its pathway is purine metabolism; AMP biosynthesis via salvage pathway; AMP from adenine: step 1/1. Functionally, catalyzes a salvage reaction resulting in the formation of AMP, that is energically less costly than de novo synthesis. This chain is Adenine phosphoribosyltransferase, found in Paracoccus denitrificans (strain Pd 1222).